We begin with the raw amino-acid sequence, 282 residues long: Mitochondrial outer membrane protein porin (282 aa).

The protein belongs to the eukaryotic mitochondrial porin family.

It localises to the mitochondrion outer membrane. Functionally, forms a channel through the cell membrane that allows diffusion of small hydrophilic molecules. The channel adopts an open conformation at low or zero membrane potential and a closed conformation at potentials above 30-40 mV. The open state has a weak anion selectivity whereas the closed state is cation-selective. In Candida albicans (strain SC5314 / ATCC MYA-2876) (Yeast), this protein is Mitochondrial outer membrane protein porin (POR1).